The primary structure comprises 665 residues: Dual specificity protein phosphatase 16 (665 aa).

The 116-residue stretch at 22 to 137 folds into the Rhodanese domain; sequence GTEKVLLIDS…FSRCFPGLCE (116 aa). At Lys-55 the chain carries (Microbial infection) N6-acetyllysine; by EIS. The Tyrosine-protein phosphatase domain occupies 158–300; sequence GPTRILPNLY…LLDYEKKIKN (143 aa). The active-site Phosphocysteine intermediate is Cys-244. A disordered region spans residues 321-368; sequence EPVPAVSEGGQKSETPLSPPCADSATSEAAGQRPVHPASVPSVPSVQP. Positions 354-368 are enriched in low complexity; that stretch reads PVHPASVPSVPSVQP. The residue at position 446 (Ser-446) is a Phosphoserine; by MAPK1. Composition is skewed to polar residues over residues 449 to 458 and 487 to 499; these read QELSEQTPET and VRTS…QRSL. Disordered regions lie at residues 449-505 and 597-665; these read QELS…PLHR and VRRR…IEVS. Ser-501 is subject to Phosphoserine. Positions 602–622 are enriched in basic and acidic residues; the sequence is KPSDRADSRRSWHEESPFEKQ.

Belongs to the protein-tyrosine phosphatase family. Non-receptor class dual specificity subfamily. In terms of assembly, interacts with ARRB2. Post-translationally, phosphorylated at Ser-446 by MAPK1/ERK2, which prevents its degradation, and thereby stabilizes it and blocks JNK MAPK activity. (Microbial infection) Acetylated at Lys-55 by the M.tuberculosis Eis protein; this leads to the inhibition of JNK-dependent autophagy, phagosome maturation, and ROS (reactive oxygen species) generation for enhanced intracellular survival of M.tuberculosis.

The protein resides in the cytoplasm. Its subcellular location is the nucleus. It is found in the cytoplasmic vesicle. It catalyses the reaction O-phospho-L-tyrosyl-[protein] + H2O = L-tyrosyl-[protein] + phosphate. The catalysed reaction is O-phospho-L-seryl-[protein] + H2O = L-seryl-[protein] + phosphate. It carries out the reaction O-phospho-L-threonyl-[protein] + H2O = L-threonyl-[protein] + phosphate. In terms of biological role, dual specificity protein phosphatase involved in the inactivation of MAP kinases. Dephosphorylates MAPK10 bound to ARRB2. This Homo sapiens (Human) protein is Dual specificity protein phosphatase 16 (DUSP16).